We begin with the raw amino-acid sequence, 1064 residues long: Carbamoyl phosphate synthase large chain (1064 aa).

The tract at residues 1–401 (MPKRNDIKKI…SLLKAVRSLE (401 aa)) is carboxyphosphate synthetic domain. Residues Arg129, Arg169, Gly175, Gly176, Glu208, Ile210, Glu215, Gly241, Val242, His243, Gln284, and Glu298 each contribute to the ATP site. Residues 133 to 327 (KELCESINEP…IAKMSAKIAI (195 aa)) form the ATP-grasp 1 domain. Mg(2+) is bound by residues Gln284, Glu298, and Asn300. Residues Gln284, Glu298, and Asn300 each coordinate Mn(2+). Positions 402-546 (IGVFHNEMTE…YSTYEWENES (145 aa)) are oligomerization domain. The carbamoyl phosphate synthetic domain stretch occupies residues 547-929 (KRSDKEKIIV…ALYKSFEAAK (383 aa)). Residues 671–861 (EKALQDLDIP…MAQLATQMIL (191 aa)) form the ATP-grasp 2 domain. ATP-binding residues include Arg707, Ser746, Leu748, Glu752, Gly777, Val778, His779, Ser780, Gln820, and Glu832. Mg(2+) is bound by residues Gln820, Glu832, and Asn834. Mn(2+)-binding residues include Gln820, Glu832, and Asn834. The region spanning 930 to 1064 (LHMADYGSVL…QSRSFTTKNI (135 aa)) is the MGS-like domain. An allosteric domain region spans residues 930–1064 (LHMADYGSVL…QSRSFTTKNI (135 aa)).

This sequence belongs to the CarB family. In terms of assembly, composed of two chains; the small (or glutamine) chain promotes the hydrolysis of glutamine to ammonia, which is used by the large (or ammonia) chain to synthesize carbamoyl phosphate. Tetramer of heterodimers (alpha,beta)4. Mg(2+) is required as a cofactor. The cofactor is Mn(2+).

It carries out the reaction hydrogencarbonate + L-glutamine + 2 ATP + H2O = carbamoyl phosphate + L-glutamate + 2 ADP + phosphate + 2 H(+). The enzyme catalyses hydrogencarbonate + NH4(+) + 2 ATP = carbamoyl phosphate + 2 ADP + phosphate + 2 H(+). It functions in the pathway amino-acid biosynthesis; L-arginine biosynthesis; carbamoyl phosphate from bicarbonate: step 1/1. Its pathway is pyrimidine metabolism; UMP biosynthesis via de novo pathway; (S)-dihydroorotate from bicarbonate: step 1/3. In terms of biological role, large subunit of the glutamine-dependent carbamoyl phosphate synthetase (CPSase). CPSase catalyzes the formation of carbamoyl phosphate from the ammonia moiety of glutamine, carbonate, and phosphate donated by ATP, constituting the first step of 2 biosynthetic pathways, one leading to arginine and/or urea and the other to pyrimidine nucleotides. The large subunit (synthetase) binds the substrates ammonia (free or transferred from glutamine from the small subunit), hydrogencarbonate and ATP and carries out an ATP-coupled ligase reaction, activating hydrogencarbonate by forming carboxy phosphate which reacts with ammonia to form carbamoyl phosphate. The polypeptide is Carbamoyl phosphate synthase large chain (Lactococcus lactis subsp. cremoris (strain MG1363)).